The following is a 210-amino-acid chain: Flagellar transcriptional regulator FlhC (210 aa).

Zn(2+) contacts are provided by cysteine 144, cysteine 147, cysteine 164, and cysteine 167.

It belongs to the FlhC family. Heterohexamer composed of two FlhC and four FlhD subunits. Each FlhC binds a FlhD dimer, forming a heterotrimer, and a hexamer assembles by dimerization of two heterotrimers. Zn(2+) is required as a cofactor.

The protein resides in the cytoplasm. Functions in complex with FlhD as a master transcriptional regulator that regulates transcription of several flagellar and non-flagellar operons by binding to their promoter region. Activates expression of class 2 flagellar genes, including fliA, which is a flagellum-specific sigma factor that turns on the class 3 genes. Also regulates genes whose products function in a variety of physiological pathways. The sequence is that of Flagellar transcriptional regulator FlhC from Cupriavidus pinatubonensis (strain JMP 134 / LMG 1197) (Cupriavidus necator (strain JMP 134)).